We begin with the raw amino-acid sequence, 146 residues long: Anti-sigma F factor (146 aa).

The protein belongs to the anti-sigma-factor family.

It carries out the reaction L-seryl-[protein] + ATP = O-phospho-L-seryl-[protein] + ADP + H(+). The catalysed reaction is L-threonyl-[protein] + ATP = O-phospho-L-threonyl-[protein] + ADP + H(+). Binds to sigma F and blocks its ability to form an RNA polymerase holoenzyme (E-sigma F). Phosphorylates SpoIIAA on a serine residue. This phosphorylation may enable SpoIIAA to act as an anti-anti-sigma factor that counteracts SpoIIAB and thus releases sigma F from inhibition. In Bacillus subtilis (strain 168), this protein is Anti-sigma F factor (spoIIAB).